The primary structure comprises 262 residues: 3-methyl-2-oxobutanoate hydroxymethyltransferase (262 aa).

The Mg(2+) site is built by Asp-43 and Asp-82. 3-methyl-2-oxobutanoate contacts are provided by residues 43–44 (DS), Asp-82, and Lys-111. Residue Glu-113 coordinates Mg(2+). Residue Glu-180 is the Proton acceptor of the active site.

The protein belongs to the PanB family. Homodecamer; pentamer of dimers. Mg(2+) serves as cofactor.

The protein resides in the cytoplasm. It catalyses the reaction 3-methyl-2-oxobutanoate + (6R)-5,10-methylene-5,6,7,8-tetrahydrofolate + H2O = 2-dehydropantoate + (6S)-5,6,7,8-tetrahydrofolate. The protein operates within cofactor biosynthesis; (R)-pantothenate biosynthesis; (R)-pantoate from 3-methyl-2-oxobutanoate: step 1/2. In terms of biological role, catalyzes the reversible reaction in which hydroxymethyl group from 5,10-methylenetetrahydrofolate is transferred onto alpha-ketoisovalerate to form ketopantoate. The protein is 3-methyl-2-oxobutanoate hydroxymethyltransferase of Wolinella succinogenes (strain ATCC 29543 / DSM 1740 / CCUG 13145 / JCM 31913 / LMG 7466 / NCTC 11488 / FDC 602W) (Vibrio succinogenes).